The following is a 694-amino-acid chain: MPEFLEDPSVLTKDKLKSELVANNVTLPAGEQRKDVYVQLYLQHLTARNRPPLPAGTNSKGPPDFSSDEEREPTPVLGSGAAAAGRSRAAVGRKATKKTDKPRQEDKDDLDVTELTNEDLLDQLVKYGVNPGPIVGTTRKLYEKKLLKLREQGTESRSSTPLPTISSSAENTRQNGSNDSDRYSDNEEGKKKEHKKVKSTRDIVPFSELGTTPSGGGFFQGISFPEISTRPPLGSTELQAAKKVHTSKGDLPREPLVATNLPGRGQLQKLASERNLFISCKSSHDRCLEKSSSSSSQPEHSAMLVSTAASPSLIKETTTGYYKDIVENICGREKSGIQPLCPERSHISDQSPLSSKRKALEESESSQLISPPLAQAIRDYVNSLLVQGGVGSLPGTSNSMPPLDVENIQKRIDQSKFQETEFLSPPRKVPRLSEKSVEERDSGSFVAFQNIPGSELMSSFAKTVVSHSLTTLGLEVAKQSQHDKIDASELSFPFHESILKVIEEEWQQVDRQLPSLACKYPVSSREATQILSVPKVDDEILGFISEATPLGGIQAASTESCNQQLDLALCRAYEAAASALQIATHTAFVAKAMQADISQAAQILSSDPSRTHQALGILSKTYDAASYICEAAFDEVKMAAHTMGNATVGRRYLWLKDCKINLASKNKLASTPFKGGTLFGGEVCKVIKKRGNKH.

Residues 5–48 (LEDPSVLTKDKLKSELVANNVTLPAGEQRKDVYVQLYLQHLTAR) enclose the LEM-like domain. Disordered regions lie at residues 47–117 (ARNR…ELTN) and 150–209 (REQG…FSEL). The linker stretch occupies residues 49-108 (NRPPLPAGTNSKGPPDFSSDEEREPTPVLGSGAAAAGRSRAAVGRKATKKTDKPRQEDKD). Threonine 57 carries the phosphothreonine modification. Phosphoserine is present on residues serine 59, serine 66, and serine 67. Threonine 74 carries the phosphothreonine modification. Over residues 78-93 (GSGAAAAGRSRAAVGR) the composition is skewed to low complexity. Phosphoserine is present on serine 79. Omega-N-methylarginine occurs at positions 86 and 88. The span at 97-106 (KKTDKPRQED) shows a compositional bias: basic and acidic residues. Over residues 107-117 (KDDLDVTELTN) the composition is skewed to acidic residues. Residues 109–153 (DLDVTELTNEDLLDQLVKYGVNPGPIVGTTRKLYEKKLLKLREQG) form the LEM domain. Residue threonine 154 is modified to Phosphothreonine. Positions 155 to 178 (ESRSSTPLPTISSSAENTRQNGSN) are enriched in polar residues. Serine 156 and serine 159 each carry phosphoserine. Phosphothreonine is present on residues threonine 160 and threonine 164. Residues serine 166 and serine 168 each carry the phosphoserine modification. A compositionally biased stretch (basic and acidic residues) spans 179 to 191 (DSDRYSDNEEGKK). Residues 190–196 (KKKEHKK) carry the Nuclear localization signal motif. Phosphoserine is present on residues serine 272, serine 312, serine 351, serine 354, serine 370, and serine 424. Positions 338-368 (QPLCPERSHISDQSPLSSKRKALEESESSQL) are disordered. Residues 558 to 657 (TESCNQQLDL…VGRRYLWLKD (100 aa)) are a coiled coil. Lysine 656 carries the post-translational modification N6-acetyllysine.

Belongs to the LEM family. Interacts with LMNA, BANF1 and RB1 and with chromosomes. Associates directly or indirectly with lamins at specific cell-cycle stages. Interacts with CMTM6. Phosphorylated in a mitose-specific manner. Expressed in many tissues. Most abundant in adult thymus and fetal liver.

It is found in the nucleus. It localises to the chromosome. Its function is as follows. May be involved in the structural organization of the nucleus and in the post-mitotic nuclear assembly. Plays an important role, together with LMNA, in the nuclear anchorage of RB1. TP and TP5 may play a role in T-cell development and function. TP5 is an immunomodulating pentapeptide. In Homo sapiens (Human), this protein is Lamina-associated polypeptide 2, isoform alpha (TMPO).